A 200-amino-acid polypeptide reads, in one-letter code: UPF0301 protein Veis_1517 (200 aa).

This sequence belongs to the UPF0301 (AlgH) family.

The sequence is that of UPF0301 protein Veis_1517 from Verminephrobacter eiseniae (strain EF01-2).